Reading from the N-terminus, the 120-residue chain is MSGDDTLARLAAVIESRRGGDPEASYVARLFHKGTDAILKKVGEEATEFVMAAKDGDRPKIVAEAADLWFHAMVALAHFGLTPAQVLAELERREGQSGLEEFALRKVRGREAESTKESGP.

It belongs to the PRA-PH family.

It localises to the cytoplasm. It carries out the reaction 1-(5-phospho-beta-D-ribosyl)-ATP + H2O = 1-(5-phospho-beta-D-ribosyl)-5'-AMP + diphosphate + H(+). The protein operates within amino-acid biosynthesis; L-histidine biosynthesis; L-histidine from 5-phospho-alpha-D-ribose 1-diphosphate: step 2/9. This is Phosphoribosyl-ATP pyrophosphatase from Methylibium petroleiphilum (strain ATCC BAA-1232 / LMG 22953 / PM1).